A 146-amino-acid chain; its full sequence is Hemoglobin subunit beta (146 aa).

The residue at position 1 (Val-1) is an N-acetylvaline. One can recognise a Globin domain in the interval 2–146; it reads HLTAEEKDAV…VANALAHRYH (145 aa). Ser-44 is modified (phosphoserine). Lys-59 bears the N6-acetyllysine mark. His-63 provides a ligand contact to heme b. At Lys-82 the chain carries N6-acetyllysine. His-92 lines the heme b pocket. S-nitrosocysteine is present on Cys-93.

The protein belongs to the globin family. Heterotetramer of two alpha chains and two beta chains. Red blood cells.

Involved in oxygen transport from the lung to the various peripheral tissues. The protein is Hemoglobin subunit beta (HBB) of Hippopotamus amphibius (Hippopotamus).